The sequence spans 407 residues: S-adenosylmethionine synthase (407 aa).

Residue 140 to 145 (GQGSAD) coordinates ATP.

The protein belongs to the AdoMet synthase 2 family. Mg(2+) serves as cofactor.

The catalysed reaction is L-methionine + ATP + H2O = S-adenosyl-L-methionine + phosphate + diphosphate. It participates in amino-acid biosynthesis; S-adenosyl-L-methionine biosynthesis; S-adenosyl-L-methionine from L-methionine: step 1/1. Functionally, catalyzes the formation of S-adenosylmethionine from methionine and ATP. In Methanosphaera stadtmanae (strain ATCC 43021 / DSM 3091 / JCM 11832 / MCB-3), this protein is S-adenosylmethionine synthase.